Here is a 187-residue protein sequence, read N- to C-terminus: UPF0301 protein YqgE (187 aa).

It belongs to the UPF0301 (AlgH) family.

The sequence is that of UPF0301 protein YqgE from Escherichia coli O127:H6 (strain E2348/69 / EPEC).